A 32-amino-acid polypeptide reads, in one-letter code: Ranatuerin-2BYa (32 aa).

Cysteines 27 and 32 form a disulfide.

In terms of tissue distribution, expressed by the skin glands.

Its subcellular location is the secreted. Its function is as follows. Antibacterial activity against Gram-positive bacterium S.aureus and Gram-negative bacterium E.coli. Weak hemolytic activity. The sequence is that of Ranatuerin-2BYa from Rana boylii (Foothill yellow-legged frog).